A 1405-amino-acid chain; its full sequence is DNA-directed RNA polymerase subunit beta' (1405 aa).

Residues Cys-70, Cys-72, Cys-85, and Cys-88 each contribute to the Zn(2+) site. Mg(2+) is bound by residues Asp-460, Asp-462, and Asp-464. Residues Cys-814, Cys-888, Cys-895, and Cys-898 each contribute to the Zn(2+) site.

Belongs to the RNA polymerase beta' chain family. In terms of assembly, the RNAP catalytic core consists of 2 alpha, 1 beta, 1 beta' and 1 omega subunit. When a sigma factor is associated with the core the holoenzyme is formed, which can initiate transcription. Mg(2+) is required as a cofactor. Requires Zn(2+) as cofactor.

It catalyses the reaction RNA(n) + a ribonucleoside 5'-triphosphate = RNA(n+1) + diphosphate. DNA-dependent RNA polymerase catalyzes the transcription of DNA into RNA using the four ribonucleoside triphosphates as substrates. In Shewanella sp. (strain MR-7), this protein is DNA-directed RNA polymerase subunit beta'.